We begin with the raw amino-acid sequence, 94 residues long: Co-chaperonin GroES (94 aa).

It belongs to the GroES chaperonin family. In terms of assembly, heptamer of 7 subunits arranged in a ring. Interacts with the chaperonin GroEL.

It localises to the cytoplasm. Its function is as follows. Together with the chaperonin GroEL, plays an essential role in assisting protein folding. The GroEL-GroES system forms a nano-cage that allows encapsulation of the non-native substrate proteins and provides a physical environment optimized to promote and accelerate protein folding. GroES binds to the apical surface of the GroEL ring, thereby capping the opening of the GroEL channel. The polypeptide is Co-chaperonin GroES (Halothermothrix orenii (strain H 168 / OCM 544 / DSM 9562)).